A 259-amino-acid polypeptide reads, in one-letter code: Putative hydro-lyase Bphyt_4813 (259 aa).

This sequence belongs to the D-glutamate cyclase family.

The chain is Putative hydro-lyase Bphyt_4813 from Paraburkholderia phytofirmans (strain DSM 17436 / LMG 22146 / PsJN) (Burkholderia phytofirmans).